Consider the following 726-residue polypeptide: Pyrroloquinoline quinone-dependent pyranose dehydrogenase (726 aa).

The first 18 residues, 1-18 (MRSSSLAWALGLVALANA), serve as a signal peptide directing secretion. Heme b is bound by residues methionine 83 and tyrosine 108. Cysteine 138 and cysteine 141 are disulfide-bonded. The N-linked (GlcNAc...) asparagine glycan is linked to asparagine 140. Heme b contacts are provided by arginine 181 and histidine 182. The segment at 211–242 (PPLSGGAPTQPPTQQPPTTTAPPPPPPSSTFV) is disordered. Pro residues predominate over residues 219-238 (TQPPTQQPPTTTAPPPPPPS). The cysteines at positions 244 and 302 are disulfide-linked. Residues arginine 273, histidine 363, arginine 430, and asparagine 431 each contribute to the pyrroloquinoline quinone site. Residues serine 449 and aspartate 451 each coordinate Ca(2+). The cysteines at positions 492 and 525 are disulfide-linked. Histidine 539 provides a ligand contact to pyrroloquinoline quinone. Asparagine 551 carries an N-linked (GlcNAc...) asparagine glycan. Positions 560, 563, and 564 each coordinate pyrroloquinoline quinone. A disulfide bridge connects residues cysteine 611 and cysteine 619. Residue arginine 621 coordinates pyrroloquinoline quinone. Pro residues predominate over residues 659–678 (ITQPPITTSPPTPTTPPVVQ). The segment at 659 to 689 (ITQPPITTSPPTPTTPPVVQPPTTVAPPQAS) is disordered. Residues 679–689 (PPTTVAPPQAS) show a composition bias toward low complexity. The CBM1 domain maps to 688–724 (ASQTLWGQCGGQGWTGPTLCPANSVCRESNQWYSQCV).

It belongs to the sugar dehydrogenase AA12 family. The cofactor is Ca(2+). Pyrroloquinoline quinone serves as cofactor. It depends on heme b as a cofactor.

The protein localises to the secreted. Functionally, pyrroloquinoline quinone (PPQ)-dependent oxidoreductase that catalyzes the oxidation of various sugars including L-galactose, L-gulose, D-talose, D-arabinose, D-lyxose, L-fucose and D-glucosone. Shows significant activity toward the reverse-chair conformation of pyranoses. Shows little or no activity toward abundant sugars such as D-glucose, D-fructose, cellobiose, as well L-xylose and L-glucose. This enzyme is able to direct electrical communication with electrodes, without artificial electron mediators, thus allowing direct electron transfer (DET)-type bioelectrocatalysis. Exhibits binding affinity for insoluble cellulose. PDH does not oxidize cello-oligosaccharides but is able to activate the C-1-oxidizing Neurospora crassa LPMO9F and the C-4-oxidizing Neurospora crassa LPMO9C thanks to the electron-tranfer activity of the cytochrome domain and the localization of PDH in the vicinity of the LPMO substrates by the CBM1 domain. In Coprinopsis cinerea (strain Okayama-7 / 130 / ATCC MYA-4618 / FGSC 9003) (Inky cap fungus), this protein is Pyrroloquinoline quinone-dependent pyranose dehydrogenase.